A 629-amino-acid polypeptide reads, in one-letter code: DNA mismatch repair protein MutL (629 aa).

Belongs to the DNA mismatch repair MutL/HexB family.

Its function is as follows. This protein is involved in the repair of mismatches in DNA. It is required for dam-dependent methyl-directed DNA mismatch repair. May act as a 'molecular matchmaker', a protein that promotes the formation of a stable complex between two or more DNA-binding proteins in an ATP-dependent manner without itself being part of a final effector complex. The sequence is that of DNA mismatch repair protein MutL from Haemophilus influenzae (strain PittGG).